A 153-amino-acid chain; its full sequence is Aspartate carbamoyltransferase regulatory chain (153 aa).

4 residues coordinate Zn(2+): C109, C114, C138, and C141.

The protein belongs to the PyrI family. As to quaternary structure, contains catalytic and regulatory chains. Requires Zn(2+) as cofactor.

Involved in allosteric regulation of aspartate carbamoyltransferase. This is Aspartate carbamoyltransferase regulatory chain from Vibrio vulnificus (strain YJ016).